A 79-amino-acid polypeptide reads, in one-letter code: Exodeoxyribonuclease 7 small subunit (79 aa).

It belongs to the XseB family. In terms of assembly, heterooligomer composed of large and small subunits.

It is found in the cytoplasm. The catalysed reaction is Exonucleolytic cleavage in either 5'- to 3'- or 3'- to 5'-direction to yield nucleoside 5'-phosphates.. Functionally, bidirectionally degrades single-stranded DNA into large acid-insoluble oligonucleotides, which are then degraded further into small acid-soluble oligonucleotides. This Syntrophus aciditrophicus (strain SB) protein is Exodeoxyribonuclease 7 small subunit.